We begin with the raw amino-acid sequence, 225 residues long: Cobalt transport protein CbiM (225 aa).

A run of 6 helical transmembrane segments spans residues 7 to 27, 43 to 63, 76 to 96, 108 to 128, 143 to 163, and 175 to 195; these read VLPL…VAIA, PFVG…VPVP, LAAV…ALLI, TLGA…YFAF, FLAG…ALAL, and FTGV…LEGV.

The protein belongs to the CbiM family. As to quaternary structure, forms an energy-coupling factor (ECF) transporter complex composed of an ATP-binding protein (A component, CbiO), a transmembrane protein (T component, CbiQ) and 2 possible substrate-capture proteins (S components, CbiM and CbiN) of unknown stoichimetry.

The protein localises to the cell inner membrane. It participates in cofactor biosynthesis; adenosylcobalamin biosynthesis. Its function is as follows. Part of the energy-coupling factor (ECF) transporter complex CbiMNOQ involved in cobalt import. This chain is Cobalt transport protein CbiM, found in Sorangium cellulosum (strain So ce56) (Polyangium cellulosum (strain So ce56)).